A 142-amino-acid polypeptide reads, in one-letter code: NTF2-related export protein 2 (142 aa).

Positions 17–136 (AAEEFVNIYY…WKIASDCFRF (120 aa)) constitute an NTF2 domain.

As to quaternary structure, associates with NXF1, NXF2, NXF3 and NXF5.

Its subcellular location is the nucleus. The protein resides in the cytoplasm. Its function is as follows. Regulator of protein export for NES-containing proteins. Also plays a role in mRNA nuclear export. This is NTF2-related export protein 2 (NXT2) from Bos taurus (Bovine).